We begin with the raw amino-acid sequence, 318 residues long: NADH-ubiquinone oxidoreductase chain 1 (318 aa).

The next 9 membrane-spanning stretches (helical) occupy residues 2–22 (FLMN…FLTL), 37–57 (PNIV…KLFI), 69–89 (LMFT…WIPM), 100–120 (LGVL…LWSG), 136–156 (VAQT…TMMM), 171–191 (HMWL…STLA), 206–226 (ELVS…FFMA), 253–273 (ELFT…FLWI), and 294–314 (LPLT…SAGI).

The protein belongs to the complex I subunit 1 family.

Its subcellular location is the mitochondrion inner membrane. The catalysed reaction is a ubiquinone + NADH + 5 H(+)(in) = a ubiquinol + NAD(+) + 4 H(+)(out). Its function is as follows. Core subunit of the mitochondrial membrane respiratory chain NADH dehydrogenase (Complex I) that is believed to belong to the minimal assembly required for catalysis. Complex I functions in the transfer of electrons from NADH to the respiratory chain. The immediate electron acceptor for the enzyme is believed to be ubiquinone. This is NADH-ubiquinone oxidoreductase chain 1 (MT-ND1) from Tolypeutes matacus (Southern three-banded armadillo).